A 369-amino-acid polypeptide reads, in one-letter code: Maltose/maltodextrin import ATP-binding protein MalK (369 aa).

The region spanning 4–234 (VTLSSVYKAF…PANRFVAGFI (231 aa)) is the ABC transporter domain. 36–43 (GPSGCGKS) is a binding site for ATP.

This sequence belongs to the ABC transporter superfamily. Maltooligosaccharide importer (TC 3.A.1.1.1) family. As to quaternary structure, the complex is composed of two ATP-binding proteins (MalK), two transmembrane proteins (MalG and MalK) and a solute-binding protein (MalE).

The protein resides in the cell inner membrane. The catalysed reaction is D-maltose(out) + ATP + H2O = D-maltose(in) + ADP + phosphate + H(+). Part of the ABC transporter complex MalEFGK involved in maltose/maltodextrin import. Responsible for energy coupling to the transport system. This is Maltose/maltodextrin import ATP-binding protein MalK from Yersinia pestis bv. Antiqua (strain Antiqua).